A 233-amino-acid polypeptide reads, in one-letter code: Phosphatidylserine decarboxylase proenzyme (233 aa).

Ser190 (schiff-base intermediate with substrate; via pyruvic acid) is an active-site residue. Position 190 is a pyruvic acid (Ser); by autocatalysis (Ser190).

It belongs to the phosphatidylserine decarboxylase family. PSD-A subfamily. Heterodimer of a large membrane-associated beta subunit and a small pyruvoyl-containing alpha subunit. Pyruvate serves as cofactor. In terms of processing, is synthesized initially as an inactive proenzyme. Formation of the active enzyme involves a self-maturation process in which the active site pyruvoyl group is generated from an internal serine residue via an autocatalytic post-translational modification. Two non-identical subunits are generated from the proenzyme in this reaction, and the pyruvate is formed at the N-terminus of the alpha chain, which is derived from the carboxyl end of the proenzyme. The post-translation cleavage follows an unusual pathway, termed non-hydrolytic serinolysis, in which the side chain hydroxyl group of the serine supplies its oxygen atom to form the C-terminus of the beta chain, while the remainder of the serine residue undergoes an oxidative deamination to produce ammonia and the pyruvoyl prosthetic group on the alpha chain.

It localises to the cell membrane. It carries out the reaction a 1,2-diacyl-sn-glycero-3-phospho-L-serine + H(+) = a 1,2-diacyl-sn-glycero-3-phosphoethanolamine + CO2. It functions in the pathway phospholipid metabolism; phosphatidylethanolamine biosynthesis; phosphatidylethanolamine from CDP-diacylglycerol: step 2/2. In terms of biological role, catalyzes the formation of phosphatidylethanolamine (PtdEtn) from phosphatidylserine (PtdSer). The polypeptide is Phosphatidylserine decarboxylase proenzyme (Bartonella quintana (strain Toulouse) (Rochalimaea quintana)).